Here is a 419-residue protein sequence, read N- to C-terminus: L-rhamnose isomerase (419 aa).

The Mn(2+) site is built by H262, D294, and D296.

It belongs to the rhamnose isomerase family. In terms of assembly, homotetramer. Mn(2+) is required as a cofactor.

The protein resides in the cytoplasm. It carries out the reaction L-rhamnopyranose = L-rhamnulose. It participates in carbohydrate degradation; L-rhamnose degradation; glycerone phosphate from L-rhamnose: step 1/3. Its function is as follows. Catalyzes the interconversion of L-rhamnose and L-rhamnulose. This Salmonella typhi protein is L-rhamnose isomerase.